Here is a 2120-residue protein sequence, read N- to C-terminus: Alpha-tectorin (2120 aa).

The first 24 residues, Met-1–Ala-24, serve as a signal peptide directing secretion. Asn-34, Asn-215, Asn-258, Asn-277, Asn-445, and Asn-496 each carry an N-linked (GlcNAc...) asparagine glycan. An NIDO domain is found at Pro-98–Arg-252. The VWFC domain maps to Ser-260–Cys-312. The VWFD 1 domain occupies Thr-317–Ser-490. 2 disulfides stabilise this stretch: Cys-319-Cys-451 and Cys-341-Cys-489. The region spanning Pro-578 to Ser-620 is the TIL 1 domain. 8 N-linked (GlcNAc...) asparagine glycosylation sites follow: Asn-666, Asn-792, Asn-822, Asn-834, Asn-877, Asn-899, Asn-907, and Asn-928. The 176-residue stretch at Gly-690–Asn-865 folds into the VWFD 2 domain. Cys-692 and Cys-828 are disulfide-bonded. The TIL 2 domain occupies Cys-963–Cys-1013. Residues Asn-1025, Asn-1041, Asn-1207, and Asn-1337 are each glycosylated (N-linked (GlcNAc...) asparagine). Positions Ala-1066 to Arg-1250 constitute a VWFD 3 domain. Cystine bridges form between Cys-1068/Cys-1213 and Cys-1090/Cys-1249. Residues Cys-1345–Cys-1398 enclose the TIL 3 domain. In terms of domain architecture, VWFD 4 spans Ser-1458 to Asn-1633. Intrachain disulfides connect Cys-1460–Cys-1594, Cys-1482–Cys-1632, Cys-1684–Cys-1742, Cys-1708–Cys-1751, Cys-1753–Cys-1785, Cys-1773–Cys-1865, and Cys-1804–Cys-1824. Asn-1511, Asn-1537, Asn-1723, Asn-1739, Asn-1761, Asn-1818, Asn-1831, Asn-1847, Asn-1887, and Asn-1906 each carry an N-linked (GlcNAc...) asparagine glycan. A ZP domain is found at Thr-1772 to His-2026. Disulfide bonds link Cys-1947–Cys-2007, Cys-1968–Cys-2023, and Cys-2012–Cys-2019. Asn-2058 is lipidated: GPI-anchor amidated asparagine. Residues Gly-2059 to Ser-2120 constitute a propeptide, removed in mature form.

As to quaternary structure, may form homomeric filament after self-association or heteromeric filament after association with beta-tectorin. At least 3 products of tectorin seem to exist: HMM, MMM and LMM. They may be generated by active processing or the result of proteolysis occurring between intrachain disulfide bonds. In terms of processing, the presence of a hydrophobic C-terminus preceded by a potential cleavage site strongly suggests that tectorins are synthesized as glycosylphosphatidylinositol-linked, membrane-bound precursors. Tectorins are targeted to the apical surface of the inner ear epithelia by the lipid and proteolytically released into the extracellular compartment. In terms of tissue distribution, expressed in the inner ear.

It localises to the cell membrane. It is found in the secreted. The protein resides in the extracellular space. The protein localises to the extracellular matrix. Functionally, one of the major non-collagenous components of the tectorial membrane. The tectorial membrane is an extracellular matrix of the inner ear that covers the neuroepithelium of the cochlea and contacts the stereocilia bundles of specialized sensory hair cells. Sound induces movement of these hair cells relative to the tectorial membrane, deflects the stereocilia and leads to fluctuations in hair-cell membrane potential, transducing sound into electrical signals. This is Alpha-tectorin (TECTA) from Gallus gallus (Chicken).